Reading from the N-terminus, the 301-residue chain is uncharacterized protein (301 aa).

Positions 16–28 (EITEESEKTKTDL) are enriched in basic and acidic residues. The disordered stretch occupies residues 16–38 (EITEESEKTKTDLQKANTPNKTE). Residues 29–38 (QKANTPNKTE) show a composition bias toward polar residues. Residues 252–301 (KENVALKMLQRCGWKEGQGLGQHNQGIINPLHVEISGFVTETKHSKINDK) enclose the G-patch domain.

This is an uncharacterized protein from Schizosaccharomyces pombe (strain 972 / ATCC 24843) (Fission yeast).